Consider the following 300-residue polypeptide: tRNA dimethylallyltransferase (300 aa).

11-18 (GPTAVGKS) contributes to the ATP binding site. 13–18 (TAVGKS) serves as a coordination point for substrate. An interaction with substrate tRNA region spans residues 35 to 38 (DSIQ).

Belongs to the IPP transferase family. As to quaternary structure, monomer. Mg(2+) is required as a cofactor.

The enzyme catalyses adenosine(37) in tRNA + dimethylallyl diphosphate = N(6)-dimethylallyladenosine(37) in tRNA + diphosphate. Catalyzes the transfer of a dimethylallyl group onto the adenine at position 37 in tRNAs that read codons beginning with uridine, leading to the formation of N6-(dimethylallyl)adenosine (i(6)A). This Borrelia duttonii (strain Ly) protein is tRNA dimethylallyltransferase.